The primary structure comprises 200 residues: Large ribosomal subunit protein bL25 (200 aa).

Residues 1 to 20 (MEARELKANVRKESGKEQAR) form a disordered region.

This sequence belongs to the bacterial ribosomal protein bL25 family. CTC subfamily. Part of the 50S ribosomal subunit; part of the 5S rRNA/L5/L18/L25 subcomplex. Contacts the 5S rRNA. Binds to the 5S rRNA independently of L5 and L18.

Its function is as follows. This is one of the proteins that binds to the 5S RNA in the ribosome where it forms part of the central protuberance. The polypeptide is Large ribosomal subunit protein bL25 (Syntrophus aciditrophicus (strain SB)).